We begin with the raw amino-acid sequence, 212 residues long: 3-isopropylmalate dehydratase small subunit 1 (212 aa).

Belongs to the LeuD family. LeuD type 1 subfamily. As to quaternary structure, heterodimer of LeuC and LeuD.

It carries out the reaction (2R,3S)-3-isopropylmalate = (2S)-2-isopropylmalate. The protein operates within amino-acid biosynthesis; L-leucine biosynthesis; L-leucine from 3-methyl-2-oxobutanoate: step 2/4. In terms of biological role, catalyzes the isomerization between 2-isopropylmalate and 3-isopropylmalate, via the formation of 2-isopropylmaleate. This chain is 3-isopropylmalate dehydratase small subunit 1, found in Chromobacterium violaceum (strain ATCC 12472 / DSM 30191 / JCM 1249 / CCUG 213 / NBRC 12614 / NCIMB 9131 / NCTC 9757 / MK).